The chain runs to 372 residues: Queuine tRNA-ribosyltransferase (372 aa).

Asp92 serves as the catalytic Proton acceptor. Substrate is bound by residues 92 to 96 (DSGGF), Asp146, Gln188, and Gly215. The RNA binding stretch occupies residues 246–252 (GIGTLRE). Asp265 acts as the Nucleophile in catalysis. The segment at 270 to 274 (TRLGR) is RNA binding; important for wobble base 34 recognition. Positions 303, 305, 308, and 334 each coordinate Zn(2+).

The protein belongs to the queuine tRNA-ribosyltransferase family. As to quaternary structure, homodimer. Within each dimer, one monomer is responsible for RNA recognition and catalysis, while the other monomer binds to the replacement base PreQ1. Zn(2+) is required as a cofactor.

The enzyme catalyses 7-aminomethyl-7-carbaguanine + guanosine(34) in tRNA = 7-aminomethyl-7-carbaguanosine(34) in tRNA + guanine. It participates in tRNA modification; tRNA-queuosine biosynthesis. Catalyzes the base-exchange of a guanine (G) residue with the queuine precursor 7-aminomethyl-7-deazaguanine (PreQ1) at position 34 (anticodon wobble position) in tRNAs with GU(N) anticodons (tRNA-Asp, -Asn, -His and -Tyr). Catalysis occurs through a double-displacement mechanism. The nucleophile active site attacks the C1' of nucleotide 34 to detach the guanine base from the RNA, forming a covalent enzyme-RNA intermediate. The proton acceptor active site deprotonates the incoming PreQ1, allowing a nucleophilic attack on the C1' of the ribose to form the product. After dissociation, two additional enzymatic reactions on the tRNA convert PreQ1 to queuine (Q), resulting in the hypermodified nucleoside queuosine (7-(((4,5-cis-dihydroxy-2-cyclopenten-1-yl)amino)methyl)-7-deazaguanosine). The chain is Queuine tRNA-ribosyltransferase from Synechococcus sp. (strain CC9605).